We begin with the raw amino-acid sequence, 382 residues long: Pentatricopeptide repeat-containing protein 2, mitochondrial (382 aa).

Residues 159–193 (TSFNILMDMLFTKGQYERAVEVLVEMRNQRVRFSK) form a PPR repeat.

It belongs to the PTCD2 family.

The protein resides in the mitochondrion. Its function is as follows. May be involved in mitochondrial RNA maturation and mitochondrial respiratory chain function. The protein is Pentatricopeptide repeat-containing protein 2, mitochondrial (ptcd2) of Xenopus laevis (African clawed frog).